The following is an 88-amino-acid chain: Small ribosomal subunit protein uS15c (88 aa).

This sequence belongs to the universal ribosomal protein uS15 family. In terms of assembly, part of the 30S ribosomal subunit.

It localises to the plastid. The protein localises to the chloroplast. The protein is Small ribosomal subunit protein uS15c (rps15) of Aethionema grandiflorum (Persian stone-cress).